The following is a 379-amino-acid chain: PqqA peptide cyclase (379 aa).

The region spanning 8–220 (LPAPIGLLAE…IRVVEEARER (213 aa)) is the Radical SAM core domain. Positions 22, 26, and 29 each coordinate [4Fe-4S] cluster.

The protein belongs to the radical SAM superfamily. PqqE family. Interacts with PqqD. The interaction is necessary for activity of PqqE. It depends on [4Fe-4S] cluster as a cofactor.

It catalyses the reaction [PQQ precursor protein] + S-adenosyl-L-methionine = E-Y cross-linked-[PQQ precursor protein] + 5'-deoxyadenosine + L-methionine + H(+). The protein operates within cofactor biosynthesis; pyrroloquinoline quinone biosynthesis. Catalyzes the cross-linking of a glutamate residue and a tyrosine residue in the PqqA protein as part of the biosynthesis of pyrroloquinoline quinone (PQQ). The polypeptide is PqqA peptide cyclase (Methylobacterium nodulans (strain LMG 21967 / CNCM I-2342 / ORS 2060)).